The primary structure comprises 184 residues: Phosphopantetheine adenylyltransferase (184 aa).

Serine 8 is a binding site for substrate. Residues 8 to 9 and histidine 16 contribute to the ATP site; that span reads SF. The substrate site is built by lysine 40, leucine 74, and arginine 88. Residues 89–91, glutamate 99, and 123–129 each bind ATP; these read GLR and WSFVSST.

The protein belongs to the bacterial CoaD family. As to quaternary structure, homohexamer. Mg(2+) serves as cofactor.

The protein resides in the cytoplasm. It carries out the reaction (R)-4'-phosphopantetheine + ATP + H(+) = 3'-dephospho-CoA + diphosphate. It participates in cofactor biosynthesis; coenzyme A biosynthesis; CoA from (R)-pantothenate: step 4/5. Functionally, reversibly transfers an adenylyl group from ATP to 4'-phosphopantetheine, yielding dephospho-CoA (dPCoA) and pyrophosphate. This is Phosphopantetheine adenylyltransferase from Deinococcus geothermalis (strain DSM 11300 / CIP 105573 / AG-3a).